The sequence spans 258 residues: tRNA pseudouridine synthase A (258 aa).

Asp53 (nucleophile) is an active-site residue. Tyr111 contributes to the substrate binding site.

This sequence belongs to the tRNA pseudouridine synthase TruA family. Homodimer.

It catalyses the reaction uridine(38/39/40) in tRNA = pseudouridine(38/39/40) in tRNA. In terms of biological role, formation of pseudouridine at positions 38, 39 and 40 in the anticodon stem and loop of transfer RNAs. This is tRNA pseudouridine synthase A from Streptococcus agalactiae serotype III (strain NEM316).